The chain runs to 512 residues: 2,3-bisphosphoglycerate-independent phosphoglycerate mutase (512 aa).

2 residues coordinate Mn(2+): D14 and S64. S64 serves as the catalytic Phosphoserine intermediate. Substrate is bound by residues H125, 155–156, R187, R193, 259–262, and K332; these read RD and RADR. D399, H403, D440, H441, and H459 together coordinate Mn(2+).

The protein belongs to the BPG-independent phosphoglycerate mutase family. As to quaternary structure, monomer. The cofactor is Mn(2+).

It carries out the reaction (2R)-2-phosphoglycerate = (2R)-3-phosphoglycerate. The protein operates within carbohydrate degradation; glycolysis; pyruvate from D-glyceraldehyde 3-phosphate: step 3/5. Functionally, catalyzes the interconversion of 2-phosphoglycerate and 3-phosphoglycerate. The polypeptide is 2,3-bisphosphoglycerate-independent phosphoglycerate mutase (Vesicomyosocius okutanii subsp. Calyptogena okutanii (strain HA)).